A 438-amino-acid polypeptide reads, in one-letter code: Plasmalemma vesicle-associated protein (438 aa).

Residues 1–26 (MGLSMDRSPYSRTGDRDRGCWYYLRY) lie on the Cytoplasmic side of the membrane. The chain crosses the membrane as a helical; Signal-anchor for type II membrane protein span at residues 27 to 47 (FFLFVSLIQFLIILGLVLFMI). Over 48–438 (YGNVHATTES…LVNPAVPPSG (391 aa)) the chain is Extracellular. N-linked (GlcNAc...) asparagine glycans are attached at residues N82, N88, N112, and N150. A coiled-coil region spans residues 289–383 (AGIERVTREN…TEVDVRISAL (95 aa)). The interval 393 to 438 (PAIQPRLPGPPPNPPPIDPASLEEFKKRILESQRPPLVNPAVPPSG) is disordered. 2 stretches are compositionally biased toward pro residues: residues 399 to 410 (LPGPPPNPPPID) and 429 to 438 (LVNPAVPPSG).

In terms of assembly, homodimer. In terms of tissue distribution, expressed in lung (alveolar endothelial and bronchial epithelial cells), kidney (endothelium of peritubular capillaries), spleen, liver, adrenal (endothelial cells of the zona reticularis of the cortex and chromaffin cells in the medulla), pancreas (islets of Langerhans), testis (germ cells, interstitial cells in neonatal testis and spermatids), ovary (stromal endothelial, thecal layer of developing follicles, luteal cells within the corpus luteum), intestine (endothelium of capillaries of the intestinal villi) and pituitary (pituicyte cells in the neural lobe) (at protein level). Expressed in lung, kidney, spleen, liver, adrenal, testis, heart, muscle, pituitary, thyroid and ovary.

The protein localises to the cell membrane. The protein resides in the membrane. It is found in the caveola. It localises to the cytoplasm. Its subcellular location is the perinuclear region. Functionally, endothelial cell-specific membrane protein involved in the formation of the diaphragms that bridge endothelial fenestrae. It is also required for the formation of stomata of caveolae and transendothelial channels. Functions in microvascular permeability, endothelial fenestrae contributing to the passage of water and solutes and regulating transcellular versus paracellular flow in different organs. Plays a specific role in embryonic development. This chain is Plasmalemma vesicle-associated protein (Plvap), found in Rattus norvegicus (Rat).